The chain runs to 187 residues: HTH-type transcriptional repressor Rv1474c (187 aa).

Positions 10–70 (AARRRQILDG…ALAREDTERM (61 aa)) constitute an HTH tetR-type domain. The segment at residues 33-52 (TVRRLEQAIGMSRGAIFHHF) is a DNA-binding region (H-T-H motif).

Homodimer.

Binding to DNA is abolished in the presence of high concentration of iron. Specifically binds to tetracycline, which leads to a conformational change in the structure of the protein and inhibits the DNA binding activity. Its function is as follows. Represses the expression of the aconitase gene acn and its own expression, in an iron-responsive manner. Binds to the inverted repeat element present in the upstream region of acn (Rv1475c)-Rv1474c operon. Preferentially binds to major groove of the DNA. This is HTH-type transcriptional repressor Rv1474c from Mycobacterium tuberculosis (strain ATCC 25618 / H37Rv).